We begin with the raw amino-acid sequence, 312 residues long: Aspartate carbamoyltransferase catalytic subunit (312 aa).

Carbamoyl phosphate is bound by residues R55 and T56. K83 lines the L-aspartate pocket. 3 residues coordinate carbamoyl phosphate: R105, H138, and Q141. Residues R171 and R225 each contribute to the L-aspartate site. Positions 266 and 267 each coordinate carbamoyl phosphate.

This sequence belongs to the aspartate/ornithine carbamoyltransferase superfamily. ATCase family. In terms of assembly, heterododecamer (2C3:3R2) of six catalytic PyrB chains organized as two trimers (C3), and six regulatory PyrI chains organized as three dimers (R2).

It catalyses the reaction carbamoyl phosphate + L-aspartate = N-carbamoyl-L-aspartate + phosphate + H(+). It participates in pyrimidine metabolism; UMP biosynthesis via de novo pathway; (S)-dihydroorotate from bicarbonate: step 2/3. Functionally, catalyzes the condensation of carbamoyl phosphate and aspartate to form carbamoyl aspartate and inorganic phosphate, the committed step in the de novo pyrimidine nucleotide biosynthesis pathway. The protein is Aspartate carbamoyltransferase catalytic subunit of Corynebacterium glutamicum (strain ATCC 13032 / DSM 20300 / JCM 1318 / BCRC 11384 / CCUG 27702 / LMG 3730 / NBRC 12168 / NCIMB 10025 / NRRL B-2784 / 534).